Here is a 227-residue protein sequence, read N- to C-terminus: Class I hydrophobin A (227 aa).

The N-terminal stretch at 1-18 (MQFSLSAIVLGLAATVYA) is a signal peptide. The N-linked (GlcNAc...) asparagine glycan is linked to Asn-50. Cystine bridges form between Cys-60-Cys-138, Cys-68-Cys-132, and Cys-69-Cys-109.

The protein belongs to the fungal hydrophobin family.

It localises to the secreted. The protein resides in the cell wall. Functionally, aerial growth, conidiation, and dispersal of filamentous fungi in the environment rely upon a capability of their secreting small amphipathic proteins called hydrophobins (HPBs) with low sequence identity. Class I can self-assemble into an outermost layer of rodlet bundles on aerial cell surfaces, conferring cellular hydrophobicity that supports fungal growth, development and dispersal; whereas Class II form highly ordered films at water-air interfaces through intermolecular interactions but contribute nothing to the rodlet structure. In P.expansum, hydrophobins contribute to germination, tolerance to cold stress and mycotoxins patulin and citrinin production. HfbA and HfbB are essential for fungal surface hydrophobicity and HfbA mediates air and water dispersal. The protein is Class I hydrophobin A of Penicillium expansum (Blue mold rot fungus).